The primary structure comprises 376 residues: MAQKQKCVAMLLAGGKGSRLSALTKNLAKPAVPFGGKYRIIDFTLSNCANSGIETVGILTQYQPLELHNYIGIGNAWDLDRVSGGVTVLPPYAESSGVKWYTGTASAIYQNLNYLSQYEPDYVLILSGDHIYKMDYSKMLDYHIEKEADVSISVIEVPWDEASRFGIMNTNEEMEIVEFEEKPQFPRSNLASMGIYIFNWAILKEYLEMDARNPESSNDFGKDVLPLLLDEGKKLMAYPFEGYWKDVGTVKSLWEANMDLLRDETSLNLNDRDWRIYSVNPNEPPQYIAEKAKVEESLINEGCVIEGDVKHSVLFQGVTVEEGSMVIDSVVMPGAKIGKNVVIERAIVGSEMVIEDGTIIRPEKNVDDVVLIAEGK.

Alpha-D-glucose 1-phosphate-binding positions include Tyr101, Gly166, 181–182 (EK), and Ser192.

Belongs to the bacterial/plant glucose-1-phosphate adenylyltransferase family. As to quaternary structure, homotetramer.

The enzyme catalyses alpha-D-glucose 1-phosphate + ATP + H(+) = ADP-alpha-D-glucose + diphosphate. It participates in glycan biosynthesis; glycogen biosynthesis. In terms of biological role, involved in the biosynthesis of ADP-glucose, a building block required for the elongation reactions to produce glycogen. Catalyzes the reaction between ATP and alpha-D-glucose 1-phosphate (G1P) to produce pyrophosphate and ADP-Glc. The polypeptide is Glucose-1-phosphate adenylyltransferase (Bacillus thuringiensis (strain Al Hakam)).